A 162-amino-acid polypeptide reads, in one-letter code: Phosphopantetheine adenylyltransferase (162 aa).

T10 lines the substrate pocket. ATP contacts are provided by residues 10-11 (TF) and H18. 3 residues coordinate substrate: K42, M74, and R88. ATP-binding positions include 89–91 (GLR), E99, and 124–130 (YAFLSST).

The protein belongs to the bacterial CoaD family. In terms of assembly, homohexamer. It depends on Mg(2+) as a cofactor.

It is found in the cytoplasm. It catalyses the reaction (R)-4'-phosphopantetheine + ATP + H(+) = 3'-dephospho-CoA + diphosphate. It functions in the pathway cofactor biosynthesis; coenzyme A biosynthesis; CoA from (R)-pantothenate: step 4/5. In terms of biological role, reversibly transfers an adenylyl group from ATP to 4'-phosphopantetheine, yielding dephospho-CoA (dPCoA) and pyrophosphate. The chain is Phosphopantetheine adenylyltransferase from Aliivibrio fischeri (strain ATCC 700601 / ES114) (Vibrio fischeri).